Here is a 588-residue protein sequence, read N- to C-terminus: Aspartate--tRNA ligase (588 aa).

Residue E177 participates in L-aspartate binding. Residues 201-204 are aspartate; the sequence is QIFK. L-aspartate is bound at residue R223. Residues 223 to 225 and Q232 contribute to the ATP site; that span reads RDE. H451 contacts L-aspartate. E485 contacts ATP. Residue R492 participates in L-aspartate binding. ATP is bound at residue 537 to 540; that stretch reads GLDR.

The protein belongs to the class-II aminoacyl-tRNA synthetase family. Type 1 subfamily. As to quaternary structure, homodimer.

It is found in the cytoplasm. It carries out the reaction tRNA(Asp) + L-aspartate + ATP = L-aspartyl-tRNA(Asp) + AMP + diphosphate. Catalyzes the attachment of L-aspartate to tRNA(Asp) in a two-step reaction: L-aspartate is first activated by ATP to form Asp-AMP and then transferred to the acceptor end of tRNA(Asp). The protein is Aspartate--tRNA ligase of Staphylococcus saprophyticus subsp. saprophyticus (strain ATCC 15305 / DSM 20229 / NCIMB 8711 / NCTC 7292 / S-41).